The sequence spans 453 residues: Secreted triacylglycerol lipase LIP3 (453 aa).

Residues 1–19 (MKLGIVAFTLISFAAQALA) form the signal peptide. Asn-98 is a glycosylation site (N-linked (GlcNAc...) asparagine). The cysteines at positions 115 and 284 are disulfide-linked. Ser-197 (nucleophile) is an active-site residue. A glycan (N-linked (GlcNAc...) asparagine) is linked at Asn-230. Active-site residues include Asp-344 and His-378. A disulfide bridge links Cys-360 with Cys-406.

It belongs to the AB hydrolase superfamily. Lipase family. Class Lip subfamily.

It is found in the secreted. The protein localises to the cell wall. The enzyme catalyses a triacylglycerol + H2O = a diacylglycerol + a fatty acid + H(+). The catalysed reaction is a monoacylglycerol + H2O = glycerol + a fatty acid + H(+). It carries out the reaction a diacylglycerol + H2O = a monoacylglycerol + a fatty acid + H(+). In terms of biological role, secreted lipase involved in Dandruff and seborrheic dermatitis (D/SD) probably via lipase-mediated breakdown of sebaceous lipids and release of irritating free fatty acids. Has triacylglycerol lipase activity and is able to hydrolyze triolein, tristearin, trilinolein, tripalmitoylglycerol and trihexadecenoin. Hydrolyzes diacylglycerols such as distearin, dilinolein, dipalmitoylglycerol and dipalmitolein. Mostly converts monoolein to di- and triolein, while free fatty acids are only produced in low amounts. This Malassezia globosa (strain ATCC MYA-4612 / CBS 7966) (Dandruff-associated fungus) protein is Secreted triacylglycerol lipase LIP3.